Consider the following 525-residue polypeptide: Protein disulfide-isomerase A2 (525 aa).

The signal sequence occupies residues M1–G21. The Thioredoxin 1 domain occupies R27–G152. Active-site nucleophile residues include C71 and C74. C71 and C74 are joined by a disulfide. N-linked (GlcNAc...) asparagine glycosylation is found at N127 and N284. The Thioredoxin 2 domain occupies V367–V496. Catalysis depends on nucleophile residues C418 and C421. A disulfide bridge connects residues C418 and C421. Residues D492–L525 form a disordered region. The segment covering E505 to P514 has biased composition (pro residues). Residue N516 is glycosylated (N-linked (GlcNAc...) asparagine). Positions N516–L525 are enriched in polar residues. The Prevents secretion from ER motif lies at K522–L525.

It belongs to the protein disulfide isomerase family. As to quaternary structure, monomer; predominantly as monomer under reducing conditions. Homodimer; disulfide-linked. Part of a large chaperone multiprotein complex comprising DNAJB11, HSP90B1, HSPA5, HYOU, PDIA2, PDIA4, PDIA6, PPIB, SDF2L1, UGGT1 and very small amounts of ERP29, but not, or at very low levels, CALR nor CANX. In terms of processing, the disulfide-linked homodimer exhibits an enhanced chaperone activity. Post-translationally, glycosylated. In terms of tissue distribution, highly expressed in pancreas (at protein level).

It is found in the endoplasmic reticulum lumen. The catalysed reaction is Catalyzes the rearrangement of -S-S- bonds in proteins.. Its function is as follows. Acts as an intracellular estrogen-binding protein. May be involved in modulating cellular levels and biological functions of estrogens in the pancreas. May act as a chaperone that inhibits aggregation of misfolded proteins. The polypeptide is Protein disulfide-isomerase A2 (PDIA2) (Homo sapiens (Human)).